The primary structure comprises 258 residues: Deoxyribose-phosphate aldolase (258 aa).

Asp-102 serves as the catalytic Proton donor/acceptor. The active-site Schiff-base intermediate with acetaldehyde is the Lys-165. The Proton donor/acceptor role is filled by Lys-199.

It belongs to the DeoC/FbaB aldolase family. DeoC type 2 subfamily.

It localises to the cytoplasm. The enzyme catalyses 2-deoxy-D-ribose 5-phosphate = D-glyceraldehyde 3-phosphate + acetaldehyde. It participates in carbohydrate degradation; 2-deoxy-D-ribose 1-phosphate degradation; D-glyceraldehyde 3-phosphate and acetaldehyde from 2-deoxy-alpha-D-ribose 1-phosphate: step 2/2. Catalyzes a reversible aldol reaction between acetaldehyde and D-glyceraldehyde 3-phosphate to generate 2-deoxy-D-ribose 5-phosphate. The sequence is that of Deoxyribose-phosphate aldolase from Aliivibrio fischeri (strain ATCC 700601 / ES114) (Vibrio fischeri).